A 290-amino-acid polypeptide reads, in one-letter code: Probable protein phosphatase 2C 20 (290 aa).

Residues 31–278 (AHGYDFVKGK…DDISCIVPCF (248 aa)) form the PPM-type phosphatase domain. The Mn(2+) site is built by aspartate 68, glycine 69, aspartate 230, and aspartate 269.

The protein belongs to the PP2C family. The cofactor is Mg(2+). Mn(2+) serves as cofactor.

The enzyme catalyses O-phospho-L-seryl-[protein] + H2O = L-seryl-[protein] + phosphate. It carries out the reaction O-phospho-L-threonyl-[protein] + H2O = L-threonyl-[protein] + phosphate. May be involved in defense signaling. The chain is Probable protein phosphatase 2C 20 (PPC3-1.2) from Arabidopsis thaliana (Mouse-ear cress).